The following is a 640-amino-acid chain: Endoglucanase 1 (640 aa).

Residues 1–24 (MARRGGAAASSSMANLLGVALVLA) form the signal peptide. D94 (nucleophile) is an active-site residue. Active-site residues include H433, D485, and E494. N-linked (GlcNAc...) asparagine glycosylation is found at N528 and N548.

Belongs to the glycosyl hydrolase 9 (cellulase E) family. As to expression, expressed in roots, leaf sheaths and flowers.

The protein localises to the secreted. It catalyses the reaction Endohydrolysis of (1-&gt;4)-beta-D-glucosidic linkages in cellulose, lichenin and cereal beta-D-glucans.. This chain is Endoglucanase 1 (GLU7), found in Oryza sativa subsp. japonica (Rice).